The sequence spans 306 residues: Bifunctional protein FolD 1 (306 aa).

Residues 170-172, Thr-199, and Val-240 each bind NADP(+); that span reads GRG. The segment at 285-306 is disordered; it reads ARRTRSSRTPVRLPDSGAPAGR.

This sequence belongs to the tetrahydrofolate dehydrogenase/cyclohydrolase family. Homodimer.

The enzyme catalyses (6R)-5,10-methylene-5,6,7,8-tetrahydrofolate + NADP(+) = (6R)-5,10-methenyltetrahydrofolate + NADPH. It carries out the reaction (6R)-5,10-methenyltetrahydrofolate + H2O = (6R)-10-formyltetrahydrofolate + H(+). It functions in the pathway one-carbon metabolism; tetrahydrofolate interconversion. Functionally, catalyzes the oxidation of 5,10-methylenetetrahydrofolate to 5,10-methenyltetrahydrofolate and then the hydrolysis of 5,10-methenyltetrahydrofolate to 10-formyltetrahydrofolate. The chain is Bifunctional protein FolD 1 from Salinispora tropica (strain ATCC BAA-916 / DSM 44818 / JCM 13857 / NBRC 105044 / CNB-440).